Here is a 663-residue protein sequence, read N- to C-terminus: tRNA (guanine(26)-N(2))-dimethyltransferase (663 aa).

Residues 1–16 (MSLARTILWLSRPLRP) constitute a mitochondrion transit peptide. The Trm1 methyltransferase domain maps to 56–498 (ATVTEGAAKI…APPEALWDIM (443 aa)). Arginine 83 is a binding site for S-adenosyl-L-methionine. At serine 121 the chain carries Phosphoserine. 2 residues coordinate S-adenosyl-L-methionine: arginine 165 and aspartate 183. Zn(2+) contacts are provided by cysteine 347, cysteine 350, cysteine 383, and cysteine 386. Serine 516 carries the phosphoserine modification. Residues 534-574 (IREDANPSSRQRGLKRFQANPEANWGPRPRARPGGKAASED) form a disordered region. The Nuclear localization signal motif lies at 540 to 572 (PSSRQRGLKRFQANPEANWGPRPRARPGGKAAS). A C3H1-type zinc finger spans residues 599–626 (RLKTFPCKRFKEGTCQLGDQCCYSHSPA). The residue at position 624 (serine 624) is a Phosphoserine. Residues 632 to 663 (GDIPIEECPETTTKISPGPKAAAGGIPGPGVD) form a disordered region.

It belongs to the class I-like SAM-binding methyltransferase superfamily. Trm1 family.

It is found in the mitochondrion. Its subcellular location is the nucleus. It localises to the cytoplasm. It catalyses the reaction guanosine(26) in tRNA + 2 S-adenosyl-L-methionine = N(2)-dimethylguanosine(26) in tRNA + 2 S-adenosyl-L-homocysteine + 2 H(+). Dimethylates a single guanine residue at position 26 of most nuclear- and mitochondrial-encoded tRNAs using S-adenosyl-L-methionine as donor of the methyl groups. tRNA guanine(26)-dimethylation is required for redox homeostasis and ensure proper cellular proliferation and oxidative stress survival. In Mus musculus (Mouse), this protein is tRNA (guanine(26)-N(2))-dimethyltransferase.